A 230-amino-acid chain; its full sequence is Prolactin-3D1 (230 aa).

An N-terminal signal peptide occupies residues 1 to 29 (MQLTLTLSRASGMQLFLLVSSLLLWEKVA). 2 cysteine pairs are disulfide-bonded: cysteine 81/cysteine 200 and cysteine 217/cysteine 225. N-linked (GlcNAc...) asparagine glycans are attached at residues asparagine 109 and asparagine 158.

The protein belongs to the somatotropin/prolactin family.

The protein localises to the secreted. The sequence is that of Prolactin-3D1 (Prl3d1) from Rattus norvegicus (Rat).